The sequence spans 238 residues: Photosynthetic NDH subunit of lumenal location 1, chloroplastic (238 aa).

The protein belongs to the PsbP family. In terms of assembly, part of the chloroplast NDH complex, composed of a mixture of chloroplast and nucleus encoded subunits. Component of the NDH lumenal subcomplex, at least composed of PnsL1, PnsL2, PnsL3, PnsL4 and PnsL5.

The protein localises to the plastid. Its subcellular location is the chloroplast thylakoid membrane. In terms of biological role, NDH shuttles electrons from NAD(P)H:plastoquinone, via FMN and iron-sulfur (Fe-S) centers, to quinones in the photosynthetic chain and possibly in a chloroplast respiratory chain. The immediate electron acceptor for the enzyme in this species is believed to be plastoquinone. Couples the redox reaction to proton translocation, and thus conserves the redox energy in a proton gradient. Required for accumulation of the chloroplast NAD(P)H dehydrogenase (NDH) complex. This is Photosynthetic NDH subunit of lumenal location 1, chloroplastic from Arabidopsis thaliana (Mouse-ear cress).